A 70-amino-acid chain; its full sequence is MPREITEIKDFLLKARRKDAKSVKIKKNPDNVKFKVRCSRFLYTLVITDKEKAEKLKQSLPPGLQVKEVR.

The protein belongs to the eukaryotic ribosomal protein eL38 family.

The polypeptide is Large ribosomal subunit protein eL38 (RpL38) (Julodis onopordi (Jewel beetle)).